Reading from the N-terminus, the 296-residue chain is Formylmethanofuran--tetrahydromethanopterin formyltransferase-like protein (296 aa).

This sequence belongs to the FTR family.

The protein is Formylmethanofuran--tetrahydromethanopterin formyltransferase-like protein (ehaS) of Methanothermobacter marburgensis (strain ATCC BAA-927 / DSM 2133 / JCM 14651 / NBRC 100331 / OCM 82 / Marburg) (Methanobacterium thermoautotrophicum).